Here is a 297-residue protein sequence, read N- to C-terminus: Acetyl-coenzyme A carboxylase carboxyl transferase subunit beta (297 aa).

Residues 1–23 are disordered; it reads MSWIERILGRTSSSSSSSKSKVP. In terms of domain architecture, CoA carboxyltransferase N-terminal spans 26–295; the sequence is VWTKCTSCEQ…PFKTAELIVE (270 aa). Zn(2+) contacts are provided by cysteine 30, cysteine 33, cysteine 49, and cysteine 52. Residues 30–52 form a C4-type zinc finger; sequence CTSCEQVLYSEELKRNMHVCPKC.

It belongs to the AccD/PCCB family. Acetyl-CoA carboxylase is a heterohexamer composed of biotin carboxyl carrier protein (AccB), biotin carboxylase (AccC) and two subunits each of ACCase subunit alpha (AccA) and ACCase subunit beta (AccD). It depends on Zn(2+) as a cofactor.

Its subcellular location is the cytoplasm. The enzyme catalyses N(6)-carboxybiotinyl-L-lysyl-[protein] + acetyl-CoA = N(6)-biotinyl-L-lysyl-[protein] + malonyl-CoA. The protein operates within lipid metabolism; malonyl-CoA biosynthesis; malonyl-CoA from acetyl-CoA: step 1/1. Its function is as follows. Component of the acetyl coenzyme A carboxylase (ACC) complex. Biotin carboxylase (BC) catalyzes the carboxylation of biotin on its carrier protein (BCCP) and then the CO(2) group is transferred by the transcarboxylase to acetyl-CoA to form malonyl-CoA. The protein is Acetyl-coenzyme A carboxylase carboxyl transferase subunit beta of Actinobacillus pleuropneumoniae serotype 5b (strain L20).